We begin with the raw amino-acid sequence, 247 residues long: 1-(5-phosphoribosyl)-5-[(5-phosphoribosylamino)methylideneamino] imidazole-4-carboxamide isomerase (247 aa).

The Proton acceptor role is filled by Asp-8. Asp-131 serves as the catalytic Proton donor.

It belongs to the HisA/HisF family.

Its subcellular location is the cytoplasm. The enzyme catalyses 1-(5-phospho-beta-D-ribosyl)-5-[(5-phospho-beta-D-ribosylamino)methylideneamino]imidazole-4-carboxamide = 5-[(5-phospho-1-deoxy-D-ribulos-1-ylimino)methylamino]-1-(5-phospho-beta-D-ribosyl)imidazole-4-carboxamide. It functions in the pathway amino-acid biosynthesis; L-histidine biosynthesis; L-histidine from 5-phospho-alpha-D-ribose 1-diphosphate: step 4/9. This chain is 1-(5-phosphoribosyl)-5-[(5-phosphoribosylamino)methylideneamino] imidazole-4-carboxamide isomerase, found in Methylobacillus flagellatus (strain ATCC 51484 / DSM 6875 / VKM B-1610 / KT).